Consider the following 179-residue polypeptide: Large ribosomal subunit protein uL5 (179 aa).

This sequence belongs to the universal ribosomal protein uL5 family. Part of the 50S ribosomal subunit; part of the 5S rRNA/L5/L18/L25 subcomplex. Contacts the 5S rRNA and the P site tRNA. Forms a bridge to the 30S subunit in the 70S ribosome.

This is one of the proteins that bind and probably mediate the attachment of the 5S RNA into the large ribosomal subunit, where it forms part of the central protuberance. In the 70S ribosome it contacts protein S13 of the 30S subunit (bridge B1b), connecting the 2 subunits; this bridge is implicated in subunit movement. Contacts the P site tRNA; the 5S rRNA and some of its associated proteins might help stabilize positioning of ribosome-bound tRNAs. The chain is Large ribosomal subunit protein uL5 from Mannheimia succiniciproducens (strain KCTC 0769BP / MBEL55E).